The sequence spans 564 residues: Hexose transporter HXT17 (564 aa).

Over residues 1 to 12 (MQSSTESDRDIQ) the composition is skewed to basic and acidic residues. The segment at 1–22 (MQSSTESDRDIQDGPDADIHVA) is disordered. Over 1–52 (MQSSTESDRDIQDGPDADIHVAPPVEKEWSDGFDDNEVINGDNVEPPKRGLI) the chain is Cytoplasmic. Residues 53 to 73 (GYLVIYLLCYPISFGGFLPGW) form a helical membrane-spanning segment. Residues 74–109 (DSGITAGFINMDNFKMNFGSYKHSTGEYYLSNVRMG) are Extracellular-facing. Residues 110-130 (LLVAMFSIGCAIGGLIFARLA) traverse the membrane as a helical segment. Topologically, residues 131 to 136 (DTLGRR) are cytoplasmic. A helical membrane pass occupies residues 137-157 (LAIVIVVLVYMVGAIIQISSN). Residues 158 to 167 (HKWYQYFVGK) lie on the Extracellular side of the membrane. The helical transmembrane segment at 168–188 (IIYGLGAGGCSVLCPMLLSEI) threads the bilayer. Residues 189-194 (APTDLR) lie on the Cytoplasmic side of the membrane. A helical transmembrane segment spans residues 195–215 (GGLVSLYQLNMTFGIFLGYCS). At 216 to 229 (VYGTRKYDNTAQWR) the chain is on the extracellular side. Residues 230 to 250 (VPLGLCFLWTLIIIIGMLLVP) form a helical membrane-spanning segment. Topologically, residues 251-333 (ESPRYLIECE…VQTFLQLTGE (83 aa)) are cytoplasmic. The chain crosses the membrane as a helical span at residues 334 to 350 (NYFFFYGTTIFKSVGLT). Over 351–356 (DGFETS) the chain is Extracellular. The helical transmembrane segment at 357-374 (IVLGTVNFFSTIIAVMVV) threads the bilayer. Topologically, residues 375–381 (DKIGRRK) are cytoplasmic. Residues 382–402 (CLLFGAAGMMACMVIFASIGV) traverse the membrane as a helical segment. The Extracellular portion of the chain corresponds to 403–424 (KCLYPHGQDGPSSKGAGNAMIV). Residues 425 to 445 (FTCFYIFCFATTWAPVAYIVV) form a helical membrane-spanning segment. The Cytoplasmic portion of the chain corresponds to 446–462 (AESFPSKVKSRAMSIST). A helical membrane pass occupies residues 463–483 (ACNWLWQFLIGFFTPFITGSI). Position 484 (H484) is a topological domain, extracellular. Residues 485 to 505 (FYYGYVFVGCLVAMFLYVFFF) traverse the membrane as a helical segment. The Cytoplasmic portion of the chain corresponds to 506 to 564 (LPETIGLSLEEIQLLYEEGIKPWKSASWVPPSRRGIPSEESKTEKKDWKKFLKFSKGSD).

Belongs to the major facilitator superfamily. Sugar transporter (TC 2.A.1.1) family.

Its subcellular location is the membrane. Functionally, probable glucose transporter. In Saccharomyces cerevisiae (strain ATCC 204508 / S288c) (Baker's yeast), this protein is Hexose transporter HXT17 (HXT17).